We begin with the raw amino-acid sequence, 123 residues long: MSCHLIQQIENQQRKEPAETFRVGDTVRVHFKIVEGKTERIQAYEGLVLCFKNSGVRRTFTVRKNSYGVGVERIFPLHSPRIERVDVVRAGKVRRAKLYYIREKIGKAARIKARIVKKPSPSA.

It belongs to the bacterial ribosomal protein bL19 family.

In terms of biological role, this protein is located at the 30S-50S ribosomal subunit interface and may play a role in the structure and function of the aminoacyl-tRNA binding site. The protein is Large ribosomal subunit protein bL19 (rplS) of Treponema pallidum (strain Nichols).